The chain runs to 377 residues: Presenilin-associated rhomboid-like protein, mitochondrial (377 aa).

The N-terminal 52 residues, 1–52 (MAWRGWAQRGWGCGQAWTLPVCGGSYEELTAALAPSRLLRRRFNFFIQQKCG), are a transit peptide targeting the mitochondrion. Topologically, residues 53–99 (FRKAPRKVEPRRSDTSSEAYKRSALIPPVEETAFYPSPYPIRTLVKP) are mitochondrial matrix. Phosphoserine is present on residues S65 and S68. The chain crosses the membrane as a helical span at residues 100 to 119 (LFFTVGFTGCAFGSAAIWQY). The Mitochondrial intermembrane segment spans residues 120–165 (ESLKSKVQSYFDGIKADWLDSIRPQKEGDFRKEINKWWNNLSDGQR). The helical transmembrane segment at 166-185 (TVTGIIAANVFVFCLWRVPS) threads the bilayer. Topologically, residues 186–205 (LQRTMIRYFTSNPASKVLCS) are mitochondrial matrix. A helical membrane pass occupies residues 206–228 (PMLLSTFSHFSLFHMAANMYVLW). The Mitochondrial intermembrane segment spans residues 229–242 (SFSSSIVNILGQEQ). A helical membrane pass occupies residues 243-260 (FMAVYLSAGVISTFVSYV). At 261-270 (CKVATGRYGP) the chain is on the mitochondrial matrix side. The chain crosses the membrane as a helical span at residues 271–287 (SLGASGAIMTVLAAVCT). The Nucleophile role is filled by S275. Residues 288–293 (KIPEGR) are Mitochondrial intermembrane-facing. The chain crosses the membrane as a helical span at residues 294–316 (LAIIFLPMFTFTAGNALKAIIAM). The Mitochondrial matrix portion of the chain corresponds to 317-330 (DTAGMILGWKFFDH). The helical transmembrane segment at 331-352 (AAHLGGALFGIWYITYGHELIW) threads the bilayer. H333 is an active-site residue. The Mitochondrial intermembrane portion of the chain corresponds to 353-377 (KNREPLVKIWHEMRTNSPKKGGGSK).

The protein belongs to the peptidase S54 family. As to quaternary structure, interacts with PSEN1 and PSEN2. Binds OPA1. Post-translationally, P-beta is proteolytically processed (beta-cleavage) in a PARL-dependent manner.

It localises to the mitochondrion inner membrane. It is found in the nucleus. It catalyses the reaction Cleaves type-1 transmembrane domains using a catalytic dyad composed of serine and histidine that are contributed by different transmembrane domains.. Functionally, required for the control of apoptosis during postnatal growth. Essential for proteolytic processing of an antiapoptotic form of OPA1 which prevents the release of mitochondrial cytochrome c in response to intrinsic apoptotic signals. Required for the maturation of PINK1 into its 52kDa mature form after its cleavage by mitochondrial-processing peptidase (MPP). Promotes cleavage of serine/threonine-protein phosphatase PGAM5 in damaged mitochondria in response to loss of mitochondrial membrane potential. Mediates differential cleavage of PINK1 and PGAM5 depending on the health status of mitochondria, disassociating from PINK1 and associating with PGAM5 in response to mitochondrial membrane potential loss. Required for processing of CLPB into a form with higher protein disaggregase activity by removing an autoinhibitory N-terminal peptide. Promotes processing of DIABLO/SMAC in the mitochondrion which is required for DIABLO apoptotic activity. Also required for cleavage of STARD7 and TTC19. Promotes changes in mitochondria morphology regulated by phosphorylation of P-beta domain. The polypeptide is Presenilin-associated rhomboid-like protein, mitochondrial (PARL) (Bos taurus (Bovine)).